The primary structure comprises 388 residues: F-box protein At4g00893 (388 aa).

Positions 1-30 (MLPSPSVHMASPPPSLNMASHPPSPATASR) are disordered. The region spanning 42–88 (NPSFADLPSSLIEEIMLLLVLKDNIRASAACKSWYEAGVSVRVVDKH) is the F-box domain.

This is F-box protein At4g00893 from Arabidopsis thaliana (Mouse-ear cress).